A 75-amino-acid chain; its full sequence is Translational regulator CsrA (75 aa).

This sequence belongs to the CsrA/RsmA family. Homodimer; the beta-strands of each monomer intercalate to form a hydrophobic core, while the alpha-helices form wings that extend away from the core.

The protein localises to the cytoplasm. In terms of biological role, a translational regulator that binds mRNA to regulate translation initiation and/or mRNA stability. Usually binds in the 5'-UTR at or near the Shine-Dalgarno sequence preventing ribosome-binding, thus repressing translation. Its main target seems to be the major flagellin gene, while its function is anatagonized by FliW. The protein is Translational regulator CsrA of Thermosipho melanesiensis (strain DSM 12029 / CIP 104789 / BI429).